We begin with the raw amino-acid sequence, 227 residues long: Thymidylate kinase (227 aa).

G16–T23 contacts ATP.

It belongs to the thymidylate kinase family.

The catalysed reaction is dTMP + ATP = dTDP + ADP. Its function is as follows. Phosphorylation of dTMP to form dTDP in both de novo and salvage pathways of dTTP synthesis. The chain is Thymidylate kinase from Xanthomonas campestris pv. campestris (strain 8004).